A 250-amino-acid polypeptide reads, in one-letter code: Beta-lactamase HcpA (250 aa).

Positions 1–25 (MLGSVKKTLFGVLCLGALCLRGLMA) are cleaved as a signal peptide. TPR repeat units follow at residues 29-62 (AKELVSLGIESVKKQDFAQAKAHFEKACELKEGF), 67-98 (LGAFYEEGKGVGKDLKKAIQFYTKGCELNDGY), 100-133 (CRLLGNLYYNGQGVSKDAKKASQYYSKSCELNHA), 134-169 (EGCTVLGSLHHYGVGTPKDLRKALDLYEKACDLKDS), and 170-202 (PGCINAGYMYGVAKNFKEAIVRYSKACELKDGR). 6 disulfides stabilise this stretch: C56–C64, C92–C100, C128–C136, C164–C172, C196–C204, and C232–C240.

It belongs to the hcp beta-lactamase family.

It is found in the secreted. The catalysed reaction is a beta-lactam + H2O = a substituted beta-amino acid. Inhibited by cloxacillin and oxacillin but not by ACA derivatives or metal chelators. Slowly hydrolyzes 6-aminopenicillinic acid and 7-aminocephalosporanic acid (ACA) derivatives. May be involved in the synthesis of the cell wall peptidoglycan. This is Beta-lactamase HcpA (hcpA) from Helicobacter pylori (strain J99 / ATCC 700824) (Campylobacter pylori J99).